A 97-amino-acid polypeptide reads, in one-letter code: Integration host factor subunit beta (97 aa).

Belongs to the bacterial histone-like protein family. As to quaternary structure, heterodimer of an alpha and a beta chain.

Functionally, this protein is one of the two subunits of integration host factor, a specific DNA-binding protein that functions in genetic recombination as well as in transcriptional and translational control. In Buchnera aphidicola subsp. Cinara cedri (strain Cc), this protein is Integration host factor subunit beta.